The following is a 350-amino-acid chain: Probable dual-specificity RNA methyltransferase RlmN (350 aa).

The Proton acceptor role is filled by E98. The region spanning 104-334 is the Radical SAM core domain; it reads HTYGNSVCVS…VTVRRELGGD (231 aa). A disulfide bond links C111 and C339. [4Fe-4S] cluster is bound by residues C118, C122, and C125. S-adenosyl-L-methionine is bound by residues 165–166, S197, 220–222, and N296; these read GE and SLH. Catalysis depends on C339, which acts as the S-methylcysteine intermediate.

The protein belongs to the radical SAM superfamily. RlmN family. [4Fe-4S] cluster is required as a cofactor.

It is found in the cytoplasm. The enzyme catalyses adenosine(2503) in 23S rRNA + 2 reduced [2Fe-2S]-[ferredoxin] + 2 S-adenosyl-L-methionine = 2-methyladenosine(2503) in 23S rRNA + 5'-deoxyadenosine + L-methionine + 2 oxidized [2Fe-2S]-[ferredoxin] + S-adenosyl-L-homocysteine. The catalysed reaction is adenosine(37) in tRNA + 2 reduced [2Fe-2S]-[ferredoxin] + 2 S-adenosyl-L-methionine = 2-methyladenosine(37) in tRNA + 5'-deoxyadenosine + L-methionine + 2 oxidized [2Fe-2S]-[ferredoxin] + S-adenosyl-L-homocysteine. Its function is as follows. Specifically methylates position 2 of adenine 2503 in 23S rRNA and position 2 of adenine 37 in tRNAs. The polypeptide is Probable dual-specificity RNA methyltransferase RlmN (Desulforamulus reducens (strain ATCC BAA-1160 / DSM 100696 / MI-1) (Desulfotomaculum reducens)).